Consider the following 485-residue polypeptide: NADH-quinone oxidoreductase subunit N (485 aa).

Helical transmembrane passes span 8–28 (LIAL…MLSI), 35–55 (FLNA…LWFV), 71–91 (GFAM…CTFA), 105–125 (FYLL…ANHL), 127–147 (ALFL…GYAF), 159–179 (YTIL…LVYA), 203–223 (LLAG…LVPF), 235–255 (PAPV…GVVM), 271–291 (VVLG…ALSQ), 297–317 (LLGY…IALQ), 326–346 (VGVY…VVSL), 373–393 (AAVM…LGFI), 408–430 (WWLV…RVAV), and 455–475 (IVVL…QPLI).

Belongs to the complex I subunit 2 family. As to quaternary structure, NDH-1 is composed of 13 different subunits. Subunits NuoA, H, J, K, L, M, N constitute the membrane sector of the complex.

The protein resides in the cell inner membrane. It carries out the reaction a quinone + NADH + 5 H(+)(in) = a quinol + NAD(+) + 4 H(+)(out). Functionally, NDH-1 shuttles electrons from NADH, via FMN and iron-sulfur (Fe-S) centers, to quinones in the respiratory chain. The immediate electron acceptor for the enzyme in this species is believed to be ubiquinone. Couples the redox reaction to proton translocation (for every two electrons transferred, four hydrogen ions are translocated across the cytoplasmic membrane), and thus conserves the redox energy in a proton gradient. The protein is NADH-quinone oxidoreductase subunit N of Salmonella arizonae (strain ATCC BAA-731 / CDC346-86 / RSK2980).